Here is a 168-residue protein sequence, read N- to C-terminus: Crossover junction endodeoxyribonuclease RuvC (168 aa).

Active-site residues include aspartate 10, glutamate 70, and aspartate 143. Mg(2+) contacts are provided by aspartate 10, glutamate 70, and aspartate 143.

Belongs to the RuvC family. As to quaternary structure, homodimer which binds Holliday junction (HJ) DNA. The HJ becomes 2-fold symmetrical on binding to RuvC with unstacked arms; it has a different conformation from HJ DNA in complex with RuvA. In the full resolvosome a probable DNA-RuvA(4)-RuvB(12)-RuvC(2) complex forms which resolves the HJ. Mg(2+) is required as a cofactor.

It is found in the cytoplasm. It catalyses the reaction Endonucleolytic cleavage at a junction such as a reciprocal single-stranded crossover between two homologous DNA duplexes (Holliday junction).. In terms of biological role, the RuvA-RuvB-RuvC complex processes Holliday junction (HJ) DNA during genetic recombination and DNA repair. Endonuclease that resolves HJ intermediates. Cleaves cruciform DNA by making single-stranded nicks across the HJ at symmetrical positions within the homologous arms, yielding a 5'-phosphate and a 3'-hydroxyl group; requires a central core of homology in the junction. The consensus cleavage sequence is 5'-(A/T)TT(C/G)-3'. Cleavage occurs on the 3'-side of the TT dinucleotide at the point of strand exchange. HJ branch migration catalyzed by RuvA-RuvB allows RuvC to scan DNA until it finds its consensus sequence, where it cleaves and resolves the cruciform DNA. The sequence is that of Crossover junction endodeoxyribonuclease RuvC from Roseiflexus sp. (strain RS-1).